The chain runs to 471 residues: Anthocyanidin 3-O-glucosyltransferase (471 aa).

His-24 serves as the catalytic Proton acceptor. His-24 contacts an anthocyanidin. Asp-130 functions as the Charge relay in the catalytic mechanism. UDP-alpha-D-glucose is bound at residue Thr-152. His-161 is an an anthocyanidin binding site. UDP-alpha-D-glucose contacts are provided by Ala-352, Gln-354, His-369, Trp-372, Ser-374, and Glu-377. Gly-392 contacts an anthocyanidin. UDP-alpha-D-glucose-binding residues include Asp-393 and Gln-394.

The protein belongs to the UDP-glycosyltransferase family.

It catalyses the reaction an anthocyanidin + UDP-alpha-D-glucose + H(+) = an anthocyanidin 3-O-beta-D-glucoside + UDP. The protein operates within pigment biosynthesis; anthocyanin biosynthesis. Functionally, in the presence of other necessary color factors, this glycosylation reaction allows the accumulation of anthocyanin pigments. The sequence is that of Anthocyanidin 3-O-glucosyltransferase (BZ1) from Zea mays (Maize).